A 321-amino-acid polypeptide reads, in one-letter code: Olfactory receptor 3A2 (321 aa).

The Extracellular segment spans residues 1-35 (MSLQKLMEPEAGTNRTAVAEFILLGLVQTEEMQPV). N14 is a glycosylation site (N-linked (GlcNAc...) asparagine). The helical transmembrane segment at 36–58 (VFVLLLFAYLVTTGGNLSILAAV) threads the bilayer. Residues 59-66 (LVEPKLHA) are Cytoplasmic-facing. The helical transmembrane segment at 67–88 (PMYFFLGNLSVLDVGCITVTVP) threads the bilayer. Residues 89–109 (AMLGRLLSHKSTISYDACLSQ) are Extracellular-facing. C106 and C198 form a disulfide bridge. Residues 110 to 129 (LFFFHLLAGMDCFLLTAMAY) traverse the membrane as a helical segment. At 130–149 (DRLLAICQPLTYSTRMSQTV) the chain is on the cytoplasmic side. A helical transmembrane segment spans residues 150 to 167 (QRMLVAASLACAFTNALT). Over 168-205 (HTVAMSTLNFCGPNEVNHFYCDLPQLFQLSCSSTQLNE) the chain is Extracellular. A helical transmembrane segment spans residues 206-229 (LLLFAVGFIMAGTPLVLIITAYSH). The Cytoplasmic portion of the chain corresponds to 230–246 (VAAAVLRIRSVEGRKKA). The helical transmembrane segment at 247-270 (FSTCGSHLTVVCLFFGRGIFNYMR) threads the bilayer. Over 271–281 (LGSEEASDKDK) the chain is Extracellular. The chain crosses the membrane as a helical span at residues 282-301 (GVGVFNTVINPMLNPLIYSL). Over 302–321 (RNPDVQGALWQIFLGRRSLT) the chain is Cytoplasmic.

This sequence belongs to the G-protein coupled receptor 1 family.

Its subcellular location is the cell membrane. Odorant receptor. In Homo sapiens (Human), this protein is Olfactory receptor 3A2 (OR3A2).